The sequence spans 69 residues: Putative membrane protein insertion efficiency factor (69 aa).

It belongs to the UPF0161 family.

It is found in the cell membrane. Its function is as follows. Could be involved in insertion of integral membrane proteins into the membrane. In Alkaliphilus metalliredigens (strain QYMF), this protein is Putative membrane protein insertion efficiency factor.